The primary structure comprises 1092 residues: MPPKKSNARNASLLKEAVTNAGRSDTASTAREGSIAATFVSDSDSSTTASGPVDEKVAAVAELITTLTTNAASDKRQSAADDIAKFVEAEGVAQMVKTKILHGIATGLHNTKQPVAREGAITAIETLIKSPVSKQIEPYMITFIPVLLERLSDKAKTVCLAADSALKALITRLTPYATKQVLPLLLAGIEYSQKWQTKVGALELMQSLSKTAPRQMTTAVPDLVPPLSEVMHDTKAEAKNAGRQTMEAICELINNKDIEKFIPALIDTIANPEKVPDTVHLLGATTFVSEVLPPTLAIMVPLLSRGLNERQTAIKRKAAVIIINMCKLVEKPQIIAPFLPRLLPTLEKIQDDVADPECRQVCQNATKILTKVGIPAPGTVMDDSYEFKKLDDKALAYLKKAIGHQQITEIPEAYRPVLEYLEHIAAAMVADGNMDNDDWNGSIIPTLKAFIPTEGTVTNAVKEFRELSFGSNVKEAVAEEEEDDAEELCNCEFSLAYGARVLLNRTHLILKRGHRYGLTGANGSGKSTLMRAIANGQVEGFPPADQLKTVAVEHDLDGAHEHDNKEVQAFVLEDPVYAHLPKETVVNMLESVGFKGPMATRPVGQLSGGWRMKLALARAMLHNADILLLDEPTNHLDVINVAWLQDYLIGLKTVTSIIVSHDSSFLDIVCSDIIHLDNFKLKRYRGNLSKFVEAVPEAKAYYELGAAQQTFRFPEPGMLEGVKTKERAILKVQNAVFQYPGTDRRQLNGVTFQCSLGSRVAVVGPNGAGKSTLIKLLCGVIEPDNGVVWRHPNLRIAYVAQHAFEHIEKHTNLTPNQYIQWRYQTGEDREEMEKAARQISAEEEAAMKKVQVISGEKKVVDSVIGRRKLKNSYEYEVSWVGKLSNENSWLPRDTLIEMGFLKKVQEIDQAEAARQGLARPLTQKEIEKHLSDVGIDSEIGTHSHIRGLSGGQKVKVVIAGAMWQRPHLLVLDEPTNFLDRDSLGALKTAIDAYGGGVIMVTHSREFSEAICKEVWKVDNGELTPTGHNWVSGQGSGPRLEDKNKDEEVFDAFGNKIDVAKQKSKLSGKDLRKKRKEREARRKRGEEVSDDDE.

Val-92 is a binding site for ADP. 7 HEAT repeats span residues 95–133 (MVKT…SPVS), 138–175 (PYMI…RLTP), 177–214 (ATKQ…TAPR), 218–255 (TAVP…LINN), 257–293 (DIEK…EVLP), 294–331 (PTLA…LVEK), and 333–370 (QIIA…KILT). Glu-454 contacts ADP. ABC transporter domains lie at 486–704 (EELC…YYEL) and 730–1044 (LKVQ…DKNK). Residues Asn-766, Glu-973, Asn-976, and His-1002 each contribute to the ADP site. Disordered regions lie at residues 1023–1044 (TPTG…DKNK) and 1063–1092 (SKLS…DDDE). Residues 1063–1075 (SKLSGKDLRKKRK) show a composition bias toward basic residues. The span at 1076–1086 (EREARRKRGEE) shows a compositional bias: basic and acidic residues.

The protein belongs to the ABC transporter superfamily. ABCF family. EF3 subfamily.

Its subcellular location is the cytoplasm. It localises to the cytosol. The catalysed reaction is ATP + H2O = ADP + phosphate + H(+). It participates in protein biosynthesis; polypeptide chain elongation. Its function is as follows. Ribosome-dependent ATPase that functions in cytoplasmic translation elongation. Required for the ATP-dependent release of deacylated tRNA from the ribosomal E-site during protein biosynthesis. Stimulates the eEF1A-dependent binding of aminoacyl-tRNA to the ribosomal A-site, which has reduced affinity for tRNA as long as the E-site is occupied. Assists translation termination by stimulating the release of nascent protein from the ribosome by release factors. In Gonapodya prolifera (strain JEL478) (Monoblepharis prolifera), this protein is Elongation factor 3.